The following is a 360-amino-acid chain: Dehydrogenase mokE (360 aa).

NADP(+) is bound at residue 50–53 (SDTK). 134–141 (AGISTAGL) is a binding site for substrate. Residues 173-176 (STAT), 196-199 (SPHN), Y214, 261-262 (LN), and T279 each bind NADP(+). 281 to 285 (GPTIF) lines the substrate pocket. 350–351 (LS) lines the NADP(+) pocket.

It belongs to the zinc-containing alcohol dehydrogenase family. Monomer.

Its pathway is polyketide biosynthesis; lovastatin biosynthesis. Its function is as follows. Dehydrogenase; part of the gene cluster that mediates the biosynthesis of monakolin K, also known as lovastatin, and which acts as a potent competitive inhibitor of HMG-CoA reductase. Monakolin K biosynthesis is performed in two stages. The first stage is catalyzed by the nonaketide synthase mokA, which belongs to type I polyketide synthases and catalyzes the iterative nine-step formation of the polyketide. This PKS stage is completed by the action of dehydrogenase mokE, which catalyzes the NADPH-dependent reduction of the unsaturated tetra-, penta- and heptaketide intermediates that arise during the mokA-mediated biosynthesis of the nonaketide chain and leads to dihydromonacolin L. Covalently bound dihydromonacolin L is released from mokA by the mokD esterase. Conversion of dihydromonacolin L into monacolin L and then monacolin J is subsequently performed with the participation of molecular oxygen and P450 monoogygenase mokC. Finally, mokF performs the conversion of monacoline J to monacoline K through the addition of the side-chain diketide moiety (2R)-2-methylbutanoate produced by the diketide synthase mokB. This is Dehydrogenase mokE from Monascus pilosus (Red mold).